We begin with the raw amino-acid sequence, 129 residues long: Large ribosomal subunit protein bL17 (129 aa).

This sequence belongs to the bacterial ribosomal protein bL17 family. As to quaternary structure, part of the 50S ribosomal subunit. Contacts protein L32.

The polypeptide is Large ribosomal subunit protein bL17 (Yersinia enterocolitica serotype O:8 / biotype 1B (strain NCTC 13174 / 8081)).